Reading from the N-terminus, the 110-residue chain is Large ribosomal subunit protein uL22 (110 aa).

This sequence belongs to the universal ribosomal protein uL22 family. As to quaternary structure, part of the 50S ribosomal subunit.

In terms of biological role, this protein binds specifically to 23S rRNA; its binding is stimulated by other ribosomal proteins, e.g. L4, L17, and L20. It is important during the early stages of 50S assembly. It makes multiple contacts with different domains of the 23S rRNA in the assembled 50S subunit and ribosome. Its function is as follows. The globular domain of the protein is located near the polypeptide exit tunnel on the outside of the subunit, while an extended beta-hairpin is found that lines the wall of the exit tunnel in the center of the 70S ribosome. This chain is Large ribosomal subunit protein uL22, found in Hydrogenovibrio crunogenus (strain DSM 25203 / XCL-2) (Thiomicrospira crunogena).